The chain runs to 302 residues: Homoserine O-acetyltransferase (302 aa).

Cysteine 142 serves as the catalytic Acyl-thioester intermediate. Lysine 163 and serine 192 together coordinate substrate. The active-site Proton acceptor is histidine 235. Residue glutamate 237 is part of the active site. Arginine 249 is a binding site for substrate.

Belongs to the MetA family.

Its subcellular location is the cytoplasm. It catalyses the reaction L-homoserine + acetyl-CoA = O-acetyl-L-homoserine + CoA. Its pathway is amino-acid biosynthesis; L-methionine biosynthesis via de novo pathway; O-acetyl-L-homoserine from L-homoserine: step 1/1. Functionally, transfers an acetyl group from acetyl-CoA to L-homoserine, forming acetyl-L-homoserine. The protein is Homoserine O-acetyltransferase of Geobacillus sp. (strain WCH70).